Here is a 103-residue protein sequence, read N- to C-terminus: RNA-binding protein YlxQ (103 aa).

Belongs to the eukaryotic ribosomal protein eL8 family.

RNA-binding protein that recognizes the K-turn motif present in ribosomal RNA, but also in box C/D and box C'/D' sRNAs. This Enterococcus faecium (Streptococcus faecium) protein is RNA-binding protein YlxQ.